Here is a 363-residue protein sequence, read N- to C-terminus: Beta-1,3-N-acetylglucosaminyltransferase lunatic fringe (363 aa).

Over 1–8 the chain is Cytoplasmic; the sequence is MLKSCGRK. The helical; Signal-anchor for type II membrane protein transmembrane segment at 9–29 threads the bilayer; that stretch reads LLLSLVGSMFTCLLVLMVEPP. Over 30–363 the chain is Lumenal; it reads GRPGLARGEA…TPWCPSNVVY (334 aa). R113 serves as a coordination point for substrate. N-linked (GlcNAc...) asparagine glycosylation is present at N151. Disulfide bonds link C152/C163 and C181/C244. Position 185 (D185) interacts with substrate. A Mn(2+)-binding site is contributed by D186. The active site involves D274. H298 provides a ligand contact to Mn(2+). A disulfide bond links C348 and C357.

The protein belongs to the glycosyltransferase 31 family. Requires Mn(2+) as cofactor. The cofactor is Co(2+). A soluble form may be derived from the membrane form by proteolytic processing.

The protein resides in the golgi apparatus membrane. The catalysed reaction is 3-O-(alpha-L-fucosyl)-L-threonyl-[EGF-like domain protein] + UDP-N-acetyl-alpha-D-glucosamine = 3-O-(N-acetyl-beta-D-glucosaminyl-(1-&gt;3)-alpha-L-fucosyl)-L-threonyl-[EGF-like domain protein] + UDP + H(+). It carries out the reaction 3-O-(alpha-L-fucosyl)-L-seryl-[EGF-like domain protein] + UDP-N-acetyl-alpha-D-glucosamine = 3-O-(N-acetyl-beta-D-glucosaminyl-(1-&gt;3)-alpha-L-fucosyl)-L-seryl-[EGF-like domain protein] + UDP + H(+). Its function is as follows. Glycosyltransferase that initiates the elongation of O-linked fucose residues attached to EGF-like repeats in the extracellular domain of Notch molecules. Essential mediator of somite segmentation and patterning. In Gallus gallus (Chicken), this protein is Beta-1,3-N-acetylglucosaminyltransferase lunatic fringe (LFNG).